A 515-amino-acid chain; its full sequence is Centromere protein T (515 aa).

Disordered regions lie at residues 24 to 156 (ADSR…KRKQ) and 271 to 411 (LSGK…DPHK). The span at 29 to 44 (PMRRRSTRINAQRRRS) shows a compositional bias: basic residues. Residues 45 to 58 (QTPYSNRQGSQTKT) show a composition bias toward polar residues. Phosphothreonine is present on threonine 86. The flexible stalk domain stretch occupies residues 94 to 375 (ILLTAPESST…DSLPAEQPPP (282 aa)). Residues 296–306 (SSGTRLQSRMS) show a composition bias toward polar residues. 6 positions are modified to phosphoserine: serine 313, serine 333, serine 345, serine 346, serine 357, and serine 376.

The protein belongs to the CENP-T/CNN1 family. As to quaternary structure, component of the CENPA-CAD complex, composed of CENPI, CENPK, CENPL, CENPO, CENPP, CENPQ, CENPR and CENPS. The CENPA-CAD complex is probably recruited on centromeres by the CENPA-NAC complex, at least composed of CENPA, CENPC, CENPH, CENPM, CENPN, CENPT and CENPU. Identified in a centromeric complex containing histones H2A, H2B, H3 and H4, and at least CENPA, CENPB, CENPC, CENPT, CENPN, HJURP, SUPT16H, SSRP1 and RSF1. Interacts (via N-terminus) with the NDC80 complex. Heterodimer with CENPW; this dimer coassembles with CENPS-CENPX heterodimers at centromeres to form the tetrameric CENP-T-W-S-X complex. In terms of processing, dynamically phosphorylated during the cell cycle. Phosphorylated during G2 phase, metaphase and anaphase, but not during telophase or G1 phase.

It is found in the nucleus. The protein resides in the chromosome. Its subcellular location is the centromere. The protein localises to the kinetochore. In terms of biological role, component of the CENPA-NAC (nucleosome-associated) complex, a complex that plays a central role in assembly of kinetochore proteins, mitotic progression and chromosome segregation. The CENPA-NAC complex recruits the CENPA-CAD (nucleosome distal) complex and may be involved in incorporation of newly synthesized CENPA into centromeres. Part of a nucleosome-associated complex that binds specifically to histone H3-containing nucleosomes at the centromere, as opposed to nucleosomes containing CENPA. Component of the heterotetrameric CENP-T-W-S-X complex that binds and supercoils DNA, and plays an important role in kinetochore assembly. CENPT has a fundamental role in kinetochore assembly and function. It is one of the inner kinetochore proteins, with most further proteins binding downstream. Required for normal chromosome organization and normal progress through mitosis. In Mus musculus (Mouse), this protein is Centromere protein T (Cenpt).